We begin with the raw amino-acid sequence, 336 residues long: Pyridoxal 5'-phosphate synthase subunit PdxS (336 aa).

Asp64 provides a ligand contact to D-ribose 5-phosphate. Lys121 acts as the Schiff-base intermediate with D-ribose 5-phosphate in catalysis. Position 193 (Gly193) interacts with D-ribose 5-phosphate. Lys205 serves as a coordination point for D-glyceraldehyde 3-phosphate. D-ribose 5-phosphate-binding positions include Gly254 and 275 to 276 (GS).

It belongs to the PdxS/SNZ family. In terms of assembly, in the presence of PdxT, forms a dodecamer of heterodimers.

It catalyses the reaction aldehydo-D-ribose 5-phosphate + D-glyceraldehyde 3-phosphate + L-glutamine = pyridoxal 5'-phosphate + L-glutamate + phosphate + 3 H2O + H(+). The protein operates within cofactor biosynthesis; pyridoxal 5'-phosphate biosynthesis. In terms of biological role, catalyzes the formation of pyridoxal 5'-phosphate from ribose 5-phosphate (RBP), glyceraldehyde 3-phosphate (G3P) and ammonia. The ammonia is provided by the PdxT subunit. Can also use ribulose 5-phosphate and dihydroxyacetone phosphate as substrates, resulting from enzyme-catalyzed isomerization of RBP and G3P, respectively. The protein is Pyridoxal 5'-phosphate synthase subunit PdxS of Pyrobaculum aerophilum (strain ATCC 51768 / DSM 7523 / JCM 9630 / CIP 104966 / NBRC 100827 / IM2).